Consider the following 131-residue polypeptide: Large ribosomal subunit protein bL17 (131 aa).

This sequence belongs to the bacterial ribosomal protein bL17 family. In terms of assembly, part of the 50S ribosomal subunit. Contacts protein L32.

The chain is Large ribosomal subunit protein bL17 from Methylobacillus flagellatus (strain ATCC 51484 / DSM 6875 / VKM B-1610 / KT).